The sequence spans 340 residues: DNA-directed RNA polymerase subunit alpha (340 aa).

The interval 1–238 (MADTFVAKNW…EQLTVFVNFD (238 aa)) is alpha N-terminal domain (alpha-NTD). Residues 253–340 (AKLNENLFRS…QAPAPAQPKA (88 aa)) form an alpha C-terminal domain (alpha-CTD) region.

This sequence belongs to the RNA polymerase alpha chain family. In terms of assembly, homodimer. The RNAP catalytic core consists of 2 alpha, 1 beta, 1 beta' and 1 omega subunit. When a sigma factor is associated with the core the holoenzyme is formed, which can initiate transcription.

It catalyses the reaction RNA(n) + a ribonucleoside 5'-triphosphate = RNA(n+1) + diphosphate. Functionally, DNA-dependent RNA polymerase catalyzes the transcription of DNA into RNA using the four ribonucleoside triphosphates as substrates. The sequence is that of DNA-directed RNA polymerase subunit alpha from Myxococcus xanthus (strain DK1622).